A 612-amino-acid polypeptide reads, in one-letter code: Dihydroxy-acid dehydratase (612 aa).

Aspartate 81 contributes to the Mg(2+) binding site. Cysteine 122 lines the [2Fe-2S] cluster pocket. Aspartate 123 and lysine 124 together coordinate Mg(2+). Lysine 124 bears the N6-carboxylysine mark. A [2Fe-2S] cluster-binding site is contributed by cysteine 195. Glutamate 491 serves as a coordination point for Mg(2+). Catalysis depends on serine 517, which acts as the Proton acceptor.

It belongs to the IlvD/Edd family. As to quaternary structure, homodimer. It depends on [2Fe-2S] cluster as a cofactor. Mg(2+) is required as a cofactor.

It carries out the reaction (2R)-2,3-dihydroxy-3-methylbutanoate = 3-methyl-2-oxobutanoate + H2O. The catalysed reaction is (2R,3R)-2,3-dihydroxy-3-methylpentanoate = (S)-3-methyl-2-oxopentanoate + H2O. It functions in the pathway amino-acid biosynthesis; L-isoleucine biosynthesis; L-isoleucine from 2-oxobutanoate: step 3/4. It participates in amino-acid biosynthesis; L-valine biosynthesis; L-valine from pyruvate: step 3/4. Functionally, functions in the biosynthesis of branched-chain amino acids. Catalyzes the dehydration of (2R,3R)-2,3-dihydroxy-3-methylpentanoate (2,3-dihydroxy-3-methylvalerate) into 2-oxo-3-methylpentanoate (2-oxo-3-methylvalerate) and of (2R)-2,3-dihydroxy-3-methylbutanoate (2,3-dihydroxyisovalerate) into 2-oxo-3-methylbutanoate (2-oxoisovalerate), the penultimate precursor to L-isoleucine and L-valine, respectively. The chain is Dihydroxy-acid dehydratase from Rhizobium etli (strain ATCC 51251 / DSM 11541 / JCM 21823 / NBRC 15573 / CFN 42).